We begin with the raw amino-acid sequence, 422 residues long: MSSSPSPRFVSRLTRNTLVLILAGGRGSRLMDLTTWRAKPAVPFGGKFRIIDFTLSNCINSGIRRIGVLTQYKAHSLIRHLRLGWGSLRGDFGEFVEILPAQQRTEGSWYRGTADAVYQSLDIVRMHDPDYVLILAGDHVYKMDYGPMLARHVETGADVTVGCLEVPVEEASAFGVMAVDGDNRVVRFQEKPADPPSIPGQSDRALASMGIYIFNRAFLFNQLIADARKESDHDFGKDIIPSLIDQARVIAFPFRDAATGGQAYWRDVGTIDAFWRTNLELVGVNPQLNLYDKEWPIWTHQEQLPPAKFVFDDDDRRGMAVDSMVSGGCIISGAYLRRSLLFSSVVVEDGSRVEDAVILPEAHIEPGCRIRKAVIDKHCRLAAGTVIGEDPEEDARRFHLSPGGVVLVTPDMLGQEIHNVYT.

Alpha-D-glucose 1-phosphate is bound by residues Y110, G175, 190 to 191, and S208; that span reads EK.

Belongs to the bacterial/plant glucose-1-phosphate adenylyltransferase family. In terms of assembly, homotetramer.

It catalyses the reaction alpha-D-glucose 1-phosphate + ATP + H(+) = ADP-alpha-D-glucose + diphosphate. The protein operates within glycan biosynthesis; glycogen biosynthesis. In terms of biological role, involved in the biosynthesis of ADP-glucose, a building block required for the elongation reactions to produce glycogen. Catalyzes the reaction between ATP and alpha-D-glucose 1-phosphate (G1P) to produce pyrophosphate and ADP-Glc. The chain is Glucose-1-phosphate adenylyltransferase 2 from Alkalilimnicola ehrlichii (strain ATCC BAA-1101 / DSM 17681 / MLHE-1).